Consider the following 714-residue polypeptide: Fatty acid oxidation complex subunit alpha (714 aa).

The interval 1–190 (MEMTSAFTLN…KLGLVDDVVP (190 aa)) is enoyl-CoA hydratase. Positions 306-714 (APLNSVGILG…FWKTTATDLQ (409 aa)) are 3-hydroxyacyl-CoA dehydrogenase.

In the N-terminal section; belongs to the enoyl-CoA hydratase/isomerase family. It in the central section; belongs to the 3-hydroxyacyl-CoA dehydrogenase family. As to quaternary structure, heterotetramer of two alpha chains (FadJ) and two beta chains (FadI).

It localises to the cytoplasm. It carries out the reaction a (3S)-3-hydroxyacyl-CoA = a (2E)-enoyl-CoA + H2O. It catalyses the reaction a 4-saturated-(3S)-3-hydroxyacyl-CoA = a (3E)-enoyl-CoA + H2O. The enzyme catalyses a (3S)-3-hydroxyacyl-CoA + NAD(+) = a 3-oxoacyl-CoA + NADH + H(+). The catalysed reaction is (3S)-3-hydroxybutanoyl-CoA = (3R)-3-hydroxybutanoyl-CoA. It functions in the pathway lipid metabolism; fatty acid beta-oxidation. Catalyzes the formation of a hydroxyacyl-CoA by addition of water on enoyl-CoA. Also exhibits 3-hydroxyacyl-CoA epimerase and 3-hydroxyacyl-CoA dehydrogenase activities. Strongly involved in the anaerobic degradation of long and medium-chain fatty acids in the presence of nitrate and weakly involved in the aerobic degradation of long-chain fatty acids. The chain is Fatty acid oxidation complex subunit alpha (fadJ) from Escherichia coli (strain K12).